A 293-amino-acid chain; its full sequence is Fructose-bisphosphate aldolase (293 aa).

Residue Ser50 participates in D-glyceraldehyde 3-phosphate binding. The active-site Proton donor is the Asp85. 4 residues coordinate Zn(2+): His86, Asp106, Glu136, and His178. Gly179 is a binding site for dihydroxyacetone phosphate. His208 contributes to the Zn(2+) binding site. Dihydroxyacetone phosphate-binding positions include 209–211 (GGS) and 230–233 (NVNT).

Belongs to the class II fructose-bisphosphate aldolase family. It depends on Zn(2+) as a cofactor.

It catalyses the reaction beta-D-fructose 1,6-bisphosphate = D-glyceraldehyde 3-phosphate + dihydroxyacetone phosphate. It functions in the pathway carbohydrate degradation; glycolysis; D-glyceraldehyde 3-phosphate and glycerone phosphate from D-glucose: step 4/4. Functionally, catalyzes the aldol condensation of dihydroxyacetone phosphate (DHAP or glycerone-phosphate) with glyceraldehyde 3-phosphate (G3P) to form fructose 1,6-bisphosphate (FBP) in gluconeogenesis and the reverse reaction in glycolysis. The polypeptide is Fructose-bisphosphate aldolase (fba) (Streptococcus pneumoniae serotype 4 (strain ATCC BAA-334 / TIGR4)).